The chain runs to 209 residues: Octanoyltransferase (209 aa).

The BPL/LPL catalytic domain maps to 30–209 (DNEPEIVYLV…IQTEFNKIFK (180 aa)). Residues 69–76 (RGGKFTFH), 143–145 (AIG), and 156–158 (GVA) contribute to the substrate site. The active-site Acyl-thioester intermediate is C174.

It belongs to the LipB family.

It localises to the cytoplasm. The enzyme catalyses octanoyl-[ACP] + L-lysyl-[protein] = N(6)-octanoyl-L-lysyl-[protein] + holo-[ACP] + H(+). The protein operates within protein modification; protein lipoylation via endogenous pathway; protein N(6)-(lipoyl)lysine from octanoyl-[acyl-carrier-protein]: step 1/2. In terms of biological role, catalyzes the transfer of endogenously produced octanoic acid from octanoyl-acyl-carrier-protein onto the lipoyl domains of lipoate-dependent enzymes. Lipoyl-ACP can also act as a substrate although octanoyl-ACP is likely to be the physiological substrate. This is Octanoyltransferase from Rickettsia felis (strain ATCC VR-1525 / URRWXCal2) (Rickettsia azadi).